Here is a 363-residue protein sequence, read N- to C-terminus: Diheme-cytochrome-encapsulin shell fusion protein (363 aa).

The signal sequence occupies residues 1 to 36; it reads MVMGILNTFKKVYAVTGFFALLAVFSLSQVGSSAFA. The diheme c-type cytochrome stretch occupies residues 37–74; the sequence is ACAKVDDCFSCHTTQELNAVHKNTPYQGQSCIVCHKAF. Heme-binding residues include C44, C47, H48, C67, C70, and H71. Residues 75 to 94 are linker; the sequence is AADDTCSDAKDGRFAKISSE. The interval 95-363 is encapsulin domain; it reads ININKEDWNK…KCPQAICTLE (269 aa).

The protein belongs to the encapsulin family. Family 1 subfamily. The encapsulin nanocompartment is probably formed by 180 monomers, with the N-terminus (diheme domain) inside. There are 36 pores where the pentamers meet as well as 3-fold axis channels and dimer channels. Heme serves as cofactor.

It localises to the encapsulin nanocompartment. Its function is as follows. Fusion of the shell and cargo protein of a type 1 encapsulin nanocompartment. Protein missing its signal peptide makes 33 nm particles in E.coli (called cEnc), protein missing its signal peptide and diheme domain (residues 1-86, called Enc) makes 29 nm particles. The cEnc nancompartment encloses c-type heme. The cargo protein NIR-HAO (AC P0DV45) is probably targeted to the nanocompartment by its association with the diheme domain in cEnc; removal of the diheme domain in Enc halves the amount of cargo. The protein is Diheme-cytochrome-encapsulin shell fusion protein of Kuenenia stuttgartiensis.